A 474-amino-acid chain; its full sequence is Hepatocyte nuclear factor 4-alpha (474 aa).

Residues 57–132 (SALCAICGDR…AGMKKEAVQN (76 aa)) constitute a DNA-binding region (nuclear receptor). 2 consecutive NR C4-type zinc fingers follow at residues 60 to 80 (CAIC…CDGC) and 96 to 120 (CRFS…LKKC). 2 positions are modified to phosphoserine: serine 142 and serine 143. Tyrosine 144 is modified (phosphotyrosine). An NR LBD domain is found at 147-377 (SSLPSINALL…NLLQEMLLGG (231 aa)). Residue threonine 166 is modified to Phosphothreonine. A Phosphoserine modification is found at serine 167. Residues lysine 234 and lysine 307 each participate in a glycyl lysine isopeptide (Lys-Gly) (interchain with G-Cter in ubiquitin) cross-link. Position 313 is a phosphoserine; by AMPK (serine 313). The 9aaTAD motif lies at 368 to 376 (NLLQEMLLG). Residues 419–447 (EWPRPRGQAATPETPQPSPPGGSGSEPYK) form a disordered region. A phosphothreonine mark is found at threonine 429 and threonine 432. A Phosphoserine modification is found at serine 436. The residue at position 458 (lysine 458) is an N6-acetyllysine.

This sequence belongs to the nuclear hormone receptor family. NR2 subfamily. As to quaternary structure, homodimerization is required for HNF4-alpha to bind to its recognition site. Interacts with CLOCK, BMAL1, CRY1, CRY2, PER1 and PER2. Interacts with NR0B2/SHP; the resulting heterodimer is transcriptionally inactive. Interacts with DDX3X; this interaction disrupts the interaction between HNF4 and NR0B2 that forms inactive heterodimers and enhances the formation of active HNF4 homodimers. Post-translationally, phosphorylated on tyrosine residue(s); phosphorylation is important for its DNA-binding activity. Phosphorylation may directly or indirectly play a regulatory role in the subnuclear distribution. Phosphorylation at Ser-313 by AMPK reduces the ability to form homodimers and bind DNA. In terms of processing, acetylation at Lys-458 lowers transcriptional activation by about two-fold.

Its subcellular location is the nucleus. Its function is as follows. Transcriptional regulator which controls the expression of hepatic genes during the transition of endodermal cells to hepatic progenitor cells, facilitating the recruitment of RNA pol II to the promoters of target genes. Activates the transcription of CYP2C38. Represses the CLOCK-BMAL1 transcriptional activity and is essential for circadian rhythm maintenance and period regulation in the liver and colon cells. This chain is Hepatocyte nuclear factor 4-alpha (HNF4A), found in Homo sapiens (Human).